The following is a 342-amino-acid chain: MLDPRLSVAPMVDRTDRHFRFLVRQVSLGVRLYTEMTVDQAVLRGNRERLLAFRPEEHPIALQLAGSDPKSLAEAARIGEAFGYDEINLNLGCPSEKAQEGGYGACLLLDLARVREILKAMGEAVRVPVTVKMRLGLEGKETYRGLAQSVEAMAEAGVKVFVVHARSALLALSTKANREIPPLRHDWVHRLKGDFPQLTFVTNGGIRSLEEALFHLKRVDGVMLGRAVYEDPFVLEEADRRVFGLPRRPSRLEVARRMRAYLEEEVLKGTPPWAVLRHMLNLFRGRPKGRLWRRLLSEGRSLQALDRALRLMEEEVGEEGEKEKPGPRGQREAAPGPAREGV.

FMN contacts are provided by residues 10–12 (PMV) and Q63. C93 functions as the Proton donor in the catalytic mechanism. Residues K132, H164, 203–205 (NGG), and 225–226 (GR) contribute to the FMN site. Basic and acidic residues predominate over residues 313 to 331 (EEEVGEEGEKEKPGPRGQR). Residues 313–342 (EEEVGEEGEKEKPGPRGQREAAPGPAREGV) are disordered.

It belongs to the Dus family. DusA subfamily. Requires FMN as cofactor.

It carries out the reaction 5,6-dihydrouridine(20) in tRNA + NADP(+) = uridine(20) in tRNA + NADPH + H(+). The catalysed reaction is 5,6-dihydrouridine(20) in tRNA + NAD(+) = uridine(20) in tRNA + NADH + H(+). The enzyme catalyses 5,6-dihydrouridine(20a) in tRNA + NADP(+) = uridine(20a) in tRNA + NADPH + H(+). It catalyses the reaction 5,6-dihydrouridine(20a) in tRNA + NAD(+) = uridine(20a) in tRNA + NADH + H(+). Functionally, catalyzes the synthesis of 5,6-dihydrouridine (D), a modified base found in the D-loop of most tRNAs, via the reduction of the C5-C6 double bond in target uridines. Specifically modifies U20 and U20a in tRNAs. This chain is tRNA-dihydrouridine(20/20a) synthase (dus), found in Thermus thermophilus (strain ATCC 27634 / DSM 579 / HB8).